The following is a 53-amino-acid chain: Large ribosomal subunit protein bL33A (53 aa).

This sequence belongs to the bacterial ribosomal protein bL33 family.

This is Large ribosomal subunit protein bL33A (rpmG1) from Mycoplasma genitalium (strain ATCC 33530 / DSM 19775 / NCTC 10195 / G37) (Mycoplasmoides genitalium).